A 395-amino-acid chain; its full sequence is Flap endonuclease 1 (395 aa).

Residues 1–104 (MGIKHLYQII…GELAKRFMRK (104 aa)) are N-domain. Aspartate 34 provides a ligand contact to Mg(2+). DNA is bound by residues arginine 47 and arginine 70. Mg(2+) contacts are provided by aspartate 86, glutamate 158, glutamate 160, aspartate 179, and aspartate 181. The segment at 122–253 (EVEKFSRRTV…NTALKLIRDH (132 aa)) is I-domain. Residue glutamate 158 coordinates DNA. Positions 231 and 233 each coordinate DNA. Residue aspartate 233 participates in Mg(2+) binding. Residues 341 to 349 (QQSRLEGFF) form an interaction with PCNA region. Over residues 360–389 (AVLKRKHEEKLELQKKKKKEDSKAKKEAKS) the composition is skewed to basic and acidic residues. A disordered region spans residues 360-395 (AVLKRKHEEKLELQKKKKKEDSKAKKEAKSKPRGTT).

Belongs to the XPG/RAD2 endonuclease family. FEN1 subfamily. Interacts with PCNA. Three molecules of FEN1 bind to one PCNA trimer with each molecule binding to one PCNA monomer. PCNA stimulates the nuclease activity without altering cleavage specificity. Requires Mg(2+) as cofactor. Phosphorylated. Phosphorylation upon DNA damage induces relocalization to the nuclear plasma.

It localises to the nucleus. Its subcellular location is the nucleolus. The protein localises to the nucleoplasm. It is found in the mitochondrion. In terms of biological role, structure-specific nuclease with 5'-flap endonuclease and 5'-3' exonuclease activities involved in DNA replication and repair. During DNA replication, cleaves the 5'-overhanging flap structure that is generated by displacement synthesis when DNA polymerase encounters the 5'-end of a downstream Okazaki fragment. It enters the flap from the 5'-end and then tracks to cleave the flap base, leaving a nick for ligation. Also involved in the long patch base excision repair (LP-BER) pathway, by cleaving within the apurinic/apyrimidinic (AP) site-terminated flap. Acts as a genome stabilization factor that prevents flaps from equilibrating into structures that lead to duplications and deletions. Also possesses 5'-3' exonuclease activity on nicked or gapped double-stranded DNA, and exhibits RNase H activity. Also involved in replication and repair of rDNA and in repairing mitochondrial DNA. The protein is Flap endonuclease 1 of Ajellomyces capsulatus (strain H143) (Darling's disease fungus).